A 552-amino-acid polypeptide reads, in one-letter code: CTP synthase (552 aa).

Residues 1–270 (MTKYVFVTGG…DRIICEELKL (270 aa)) form an amidoligase domain region. A CTP-binding site is contributed by S13. S13 is a UTP binding site. Residues 14–19 (SLGKGI) and D71 each bind ATP. The Mg(2+) site is built by D71 and E144. CTP-binding positions include 151–153 (DIE), 191–196 (KTKPTQ), and K227. UTP contacts are provided by residues 191–196 (KTKPTQ) and K227. Residues 295 to 547 (TIGMVGKYVD…VEAALANKQA (253 aa)) enclose the Glutamine amidotransferase type-1 domain. G356 provides a ligand contact to L-glutamine. C383 serves as the catalytic Nucleophile; for glutamine hydrolysis. Residues 384–387 (LGMQ), E407, and R473 contribute to the L-glutamine site. Residues H520 and E522 contribute to the active site.

Belongs to the CTP synthase family. Homotetramer.

It catalyses the reaction UTP + L-glutamine + ATP + H2O = CTP + L-glutamate + ADP + phosphate + 2 H(+). The catalysed reaction is L-glutamine + H2O = L-glutamate + NH4(+). It carries out the reaction UTP + NH4(+) + ATP = CTP + ADP + phosphate + 2 H(+). The protein operates within pyrimidine metabolism; CTP biosynthesis via de novo pathway; CTP from UDP: step 2/2. With respect to regulation, allosterically activated by GTP, when glutamine is the substrate; GTP has no effect on the reaction when ammonia is the substrate. The allosteric effector GTP functions by stabilizing the protein conformation that binds the tetrahedral intermediate(s) formed during glutamine hydrolysis. Inhibited by the product CTP, via allosteric rather than competitive inhibition. In terms of biological role, catalyzes the ATP-dependent amination of UTP to CTP with either L-glutamine or ammonia as the source of nitrogen. Regulates intracellular CTP levels through interactions with the four ribonucleotide triphosphates. This chain is CTP synthase, found in Burkholderia cenocepacia (strain ATCC BAA-245 / DSM 16553 / LMG 16656 / NCTC 13227 / J2315 / CF5610) (Burkholderia cepacia (strain J2315)).